Reading from the N-terminus, the 143-residue chain is MAIERTFSIIKPDAVAKNNIGAIYNRFETAGLKIIASKMVHLSKEQAEGFYAEHSERPFFGALVAFMTSGPIMVQTLEGENAVLAHRDILGATNPAEAAPGTIRADFAESIDENAAHGSDSVASAEREVAYFFSAEELCPRTR.

6 residues coordinate ATP: Lys11, Phe59, Arg87, Thr93, Arg104, and Asn114. The active-site Pros-phosphohistidine intermediate is the His117.

Belongs to the NDK family. As to quaternary structure, homotetramer. Mg(2+) serves as cofactor.

It localises to the cytoplasm. It catalyses the reaction a 2'-deoxyribonucleoside 5'-diphosphate + ATP = a 2'-deoxyribonucleoside 5'-triphosphate + ADP. It carries out the reaction a ribonucleoside 5'-diphosphate + ATP = a ribonucleoside 5'-triphosphate + ADP. In terms of biological role, major role in the synthesis of nucleoside triphosphates other than ATP. The ATP gamma phosphate is transferred to the NDP beta phosphate via a ping-pong mechanism, using a phosphorylated active-site intermediate. This chain is Nucleoside diphosphate kinase, found in Shewanella woodyi (strain ATCC 51908 / MS32).